A 758-amino-acid chain; its full sequence is GPI ethanolamine phosphate transferase 2 (758 aa).

3 N-linked (GlcNAc...) asparagine glycosylation sites follow: Asn-28, Asn-77, and Asn-178. Helical transmembrane passes span 405–425 (LVAI…FRNL), 431–451 (LLAF…SSFI), and 455–472 (HVIW…QLLN). Asn-493 is a glycosylation site (N-linked (GlcNAc...) asparagine). The next 6 helical transmembrane spans lie at 533-553 (PSPI…MPII), 561-581 (PIIA…LLLI), 598-618 (LFIL…YDIW), 667-687 (IFAV…WWCL), 698-718 (VKTF…SCFI), and 733-753 (LLYN…ISTI).

It belongs to the PIGG/PIGN/PIGO family. PIGG subfamily.

The protein localises to the endoplasmic reticulum membrane. The protein operates within glycolipid biosynthesis; glycosylphosphatidylinositol-anchor biosynthesis. Ethanolamine phosphate transferase involved in glycosylphosphatidylinositol-anchor biosynthesis. Transfers ethanolamine phosphate to the GPI second mannose. The chain is GPI ethanolamine phosphate transferase 2 (las21) from Schizosaccharomyces pombe (strain 972 / ATCC 24843) (Fission yeast).